The chain runs to 425 residues: Nucleoporin nup45 (425 aa).

The segment covering 1-10 (MFGLNKTPSF) has biased composition (polar residues). Residues 1 to 207 (MFGLNKTPSF…GFGLSNNTQT (207 aa)) are disordered. Over residues 11 to 27 (GSTGTQNQNTGTSAGTG) the composition is skewed to low complexity. Over residues 28-45 (LFSSNTFGNNTQANTPAS) the composition is skewed to polar residues. Over residues 47–56 (GFGGVTGGAF) the composition is skewed to gly residues. Positions 72 to 89 (PNATSTTPGLNLFGQNPQ) are enriched in polar residues. Low complexity-rich tracts occupy residues 112–126 (NQNQ…AAPT) and 135–150 (QNQT…ANTS). Residues 167–207 (NRPNTSTFGQFSTQPASAGLFGQSTQPSGSTGFGLSNNTQT) are compositionally biased toward polar residues. A phosphoserine mark is found at serine 289 and serine 290.

Its subcellular location is the cytoplasm. The protein localises to the nucleus. It localises to the nuclear pore complex. Functionally, functions as a component of the nuclear pore complex (NPC). NPC components, collectively referred to as nucleoporins (NUPs), can play the role of both NPC structural components and of docking or interaction partners for transiently associated nuclear transport factors. Active directional transport is assured by both, a Phe-Gly (FG) repeat affinity gradient for these transport factors across the NPC and a transport cofactor concentration gradient across the nuclear envelope. The sequence is that of Nucleoporin nup45 (nup45) from Schizosaccharomyces pombe (strain 972 / ATCC 24843) (Fission yeast).